The chain runs to 503 residues: Hemogen (503 aa).

Basic residues-rich tracts occupy residues 1-10 (MDMGKGRPRL) and 61-79 (KKRKYQRTGKGNKRGRKRQ). Residues 1 to 129 (MDMGKGRPRL…PLVPSPTKAV (129 aa)) form a disordered region. The tract at residues 7-87 (RPRLKLPQMP…RQGNVEQKAE (81 aa)) is necessary for nuclear localization. S90, S103, S124, S153, S158, S171, S213, S223, S228, S241, and S269 each carry phosphoserine. T286 bears the Phosphothreonine mark. The tract at residues 381-503 (QKTIQESPEP…ENGIYSSALF (123 aa)) is disordered. Low complexity predominate over residues 385–396 (QESPEPEQYSPE). Phosphoserine is present on residues S387 and S394. The span at 426–436 (CQDREEPKHSL) shows a compositional bias: basic and acidic residues.

As to expression, expressed in hematopoietic precursor cells. Highly expressed in bone marrow, the red pulp of the spleen and round spermatids. Weakly expressed in peripheral blood cells.

It is found in the nucleus. In terms of biological role, regulates the proliferation and differentiation of hematopoietic cells. Overexpression block the TPA-induced megakaryocytic differentiation in the K562 cell model. May also prevent cell apoptosis through the activation of the nuclear factor-kappa B (NF-kB). This is Hemogen (Hemgn) from Mus musculus (Mouse).